A 308-amino-acid chain; its full sequence is Glutaminase (308 aa).

Residues Ser-66, Asn-117, Glu-161, Asn-168, Tyr-192, Tyr-244, and Val-262 each coordinate substrate.

It belongs to the glutaminase family. Homotetramer.

It carries out the reaction L-glutamine + H2O = L-glutamate + NH4(+). The polypeptide is Glutaminase (Salmonella dublin (strain CT_02021853)).